A 74-amino-acid polypeptide reads, in one-letter code: Benzylsuccinate synthase beta subunit (74 aa).

As to quaternary structure, heterohexamer composed of 2 alpha subunits, 2 beta subunits and 2 gamma subunits.

The enzyme catalyses toluene + fumarate = 2-benzylsuccinate. It functions in the pathway xenobiotic degradation; toluene degradation. Activated by the benzylsuccinate synthase activating enzyme BssD. Rapidly inactivated by oxygen. Catalyzes the addition of fumarate to the methyl group of toluene, leading to the formation of benzylsuccinate. This chain is Benzylsuccinate synthase beta subunit (bssB), found in Thauera aromatica.